Here is a 215-residue protein sequence, read N- to C-terminus: uncharacterized protein (215 aa).

The interval 25-48 is disordered; sequence LKSASPGPAPASQQASSFGSAPAQ. Residues 27-47 show a composition bias toward low complexity; that stretch reads SASPGPAPASQQASSFGSAPA.

This is an uncharacterized protein from Homo sapiens (Human).